The primary structure comprises 595 residues: P2X purinoceptor 7 (595 aa).

The Cytoplasmic portion of the chain corresponds to 1-22; it reads MPACCSCSDVFQYETNKVTRIQ. Residue Cys4 is the site of S-palmitoyl cysteine attachment. The chain crosses the membrane as a helical span at residues 23-46; sequence SMNYGTIKWFFHVIIFSYVCFALV. Over 47-328 the chain is Extracellular; it reads SDKLYQRKEP…ILVFGTGGKF (282 aa). Intrachain disulfides connect Cys119–Cys168, Cys129–Cys152, and Cys135–Cys162. ADP-ribosylarginine is present on residues Arg125 and Arg133. Asn187 is a glycosylation site (N-linked (GlcNAc...) asparagine). Thr189 is an ATP binding site. N-linked (GlcNAc...) asparagine glycosylation is found at Asn202 and Asn213. An intrachain disulfide couples Cys216 to Cys226. An N-linked (GlcNAc...) asparagine glycan is attached at Asn241. Residues Cys260 and Cys269 are joined by a disulfide bond. N-linked (GlcNAc...) asparagine glycosylation is present at Asn284. Residues Arg294 and Lys311 each contribute to the ATP site. The chain crosses the membrane as a helical span at residues 329-353; that stretch reads DIIQLVVYIGSTLSYFGLAAVFIDF. Ser342 contacts Na(+). Residue Tyr343 is modified to Phosphotyrosine. Residues 354–595 lie on the Cytoplasmic side of the membrane; the sequence is LIDTYSSNCC…GQYSGFKSPY (242 aa). The tract at residues 360 to 377 is C-cys anchor; sequence SNCCRSHIYPWCKCCQPC. S-palmitoyl cysteine attachment occurs at residues Cys362, Cys363, Cys374, and Cys377. Ser390 bears the Phosphoserine mark. The interval 395–595 is cytoplasmic ballast; that stretch reads KPTLKYVSFV…GQYSGFKSPY (201 aa). Residues Cys479, Cys499, and Cys506 each contribute to the Zn(2+) site. Residues Arg546, His547, Tyr550, and Ala567 each coordinate GTP. Zn(2+) is bound at residue Cys572. Positions 583, 589, and 590 each coordinate GTP.

Belongs to the P2X receptor family. In terms of assembly, homotrimers. Interacts with LAMA3, ITGB2, ACTB, ACTN4, SVIL, MPP3, HSPA1, HSPCB, HSPA8, PIK230 and PTPRB. Interacts (via C-terminus) with EMP2. Interacts with isoform B; this interaction potentiates P2RX7 responses. Post-translationally, phosphorylation results in its inactivation. ADP-ribosylation at Arg-125 is necessary and sufficient to activate P2RX7 and gate the channel. In terms of processing, palmitoylation of several cysteines in the C-terminal cytoplasmic tail is required for efficient localization to cell surface. Palmitoylation prevents channel desensitization by physically anchoring the palmitoylated groups to the membrane. Widely expressed with highest levels in brain and immune tissues. As to expression, predominant form in many tissues.

It is found in the cell membrane. It carries out the reaction Ca(2+)(in) = Ca(2+)(out). The enzyme catalyses K(+)(in) = K(+)(out). It catalyses the reaction Na(+)(in) = Na(+)(out). With respect to regulation, activated by high extracellular ATP levels (0.1-2.5 mM). The synthetic analog 2'(3')-O-(4-benzoylbenzoyl)ATP (BzATP) acts as a potent agonist. Does not undergo desensitization, instead, undergoes a facilitation process where currents progressively increase with repetitive or prolonged agonist application. Palmitoylation prevents channel desensitization. The permeability of the P2RX7 channel is modulated by the amount of cholesterol in the plasma membrane. Its function is as follows. ATP-gated nonselective transmembrane cation channel that requires high millimolar concentrations of ATP for activation. Upon ATP binding, it rapidly opens to allow the influx of small cations Na(+) and Ca(2+), and the K(+) efflux. Also has the ability to form a large pore in the cell membrane, allowing the passage of large cationic molecules. In microglia, may mediate NADPH transport across the plasma membrane. In immune cells, P2RX7 acts as a molecular sensor in pathological inflammatory states by detecting and responding to high local concentrations of extracellar ATP. In microglial cells, P2RX7 activation leads to the release of pro-inflammatory cytokines, such as IL-1beta and IL-18, through the activation of the NLRP3 inflammasome and caspase-1. Cooperates with KCNK6 to activate NLRP3 inflammasome. Activates death pathways leading to apoptosis and autophagy. Activates death pathways leading to pyroptosis. Shows ion channel activity but no macropore function. Functionally, non-functional channel. The polypeptide is P2X purinoceptor 7 (P2RX7) (Homo sapiens (Human)).